Here is a 218-residue protein sequence, read N- to C-terminus: Small ribosomal subunit protein uS3 (218 aa).

Residues 43–113 (IREHIERKLA…KVQVNVREVS (71 aa)) enclose the KH type-2 domain.

Belongs to the universal ribosomal protein uS3 family. As to quaternary structure, part of the 30S ribosomal subunit. Forms a tight complex with proteins S10 and S14.

Functionally, binds the lower part of the 30S subunit head. Binds mRNA in the 70S ribosome, positioning it for translation. The sequence is that of Small ribosomal subunit protein uS3 from Rubrobacter xylanophilus (strain DSM 9941 / JCM 11954 / NBRC 16129 / PRD-1).